Reading from the N-terminus, the 232-residue chain is Recombination protein RecR (232 aa).

A C4-type zinc finger spans residues 92–107 (CQVCFHLSAEPVCDIC). The 95-residue stretch at 115 to 209 (SVICVVSDPR…KVTRIAFGLP (95 aa)) folds into the Toprim domain.

Belongs to the RecR family.

Functionally, may play a role in DNA repair. It seems to be involved in an RecBC-independent recombinational process of DNA repair. It may act with RecF and RecO. This Synechocystis sp. (strain ATCC 27184 / PCC 6803 / Kazusa) protein is Recombination protein RecR.